The sequence spans 484 residues: UDP-N-acetylmuramate--L-alanine ligase (484 aa).

Residue 124-130 coordinates ATP; it reads GTHGKTT.

It belongs to the MurCDEF family.

The protein resides in the cytoplasm. The enzyme catalyses UDP-N-acetyl-alpha-D-muramate + L-alanine + ATP = UDP-N-acetyl-alpha-D-muramoyl-L-alanine + ADP + phosphate + H(+). Its pathway is cell wall biogenesis; peptidoglycan biosynthesis. Cell wall formation. This Pseudoalteromonas atlantica (strain T6c / ATCC BAA-1087) protein is UDP-N-acetylmuramate--L-alanine ligase.